The sequence spans 437 residues: UDP-sugar transporter protein SLC35A5 (437 aa).

Residues 1–21 (MKVIFLRQLKTRGMERKCSRR) are Cytoplasmic-facing. A helical membrane pass occupies residues 22–42 (PGLGPPTLYTFLLGIIFITLS). The Lumenal portion of the chain corresponds to 43 to 65 (SSRILLVKYSANEENKYDYLPTT). The helical transmembrane segment at 66–86 (VNVCSELMKLILCILVSLCVI) threads the bilayer. Residues 87-106 (KKEDHQSRHLRCTSWKEFSS) lie on the Cytoplasmic side of the membrane. A helical membrane pass occupies residues 107 to 129 (FMKWSIPAFLYFLDNLIVFYVLS). The Lumenal portion of the chain corresponds to 130-132 (YLQ). A helical membrane pass occupies residues 133–155 (PAMAVIFSNFSIITTALLFRIVL). Residues 156 to 158 (KRH) are Cytoplasmic-facing. Residues 159–179 (LNWIQWASLLILFLSIVALTA) form a helical membrane-spanning segment. The Lumenal portion of the chain corresponds to 180–241 (STKTSQHELA…TTARVFSHIR (62 aa)). N-linked (GlcNAc...) asparagine glycosylation occurs at Asn-217. The helical transmembrane segment at 242–262 (LGLGHVLIIVQCFISSMANIY) threads the bilayer. At 263–276 (NEKILKEGTQLTES) the chain is on the cytoplasmic side. The helical transmembrane segment at 277 to 297 (IFIQNSKLYFFGIVFNGLTLV) threads the bilayer. Topologically, residues 298–316 (LQSSNRDQIQNCGFFYGHN) are lumenal. Residues 317 to 337 (AFSVVLIFVTAFQGLSVAFIL) traverse the membrane as a helical segment. Over 338 to 343 (KFLDNM) the chain is Cytoplasmic. Residues 344–364 (FHVLMAQVTTVIITTVSVLVF) traverse the membrane as a helical segment. At 365 to 367 (DFR) the chain is on the lumenal side. A helical transmembrane segment spans residues 368-388 (PSLDFFLEAPSVLLSIFIYNA). The Cytoplasmic segment spans residues 389–437 (SKPQNLECAPKQERIRHLSGSLWERSSGDGEELERLTKLKSDDSDDDTL). 3 positions are modified to phosphoserine: Ser-407, Ser-429, and Ser-432. The segment at 412-437 (ERSSGDGEELERLTKLKSDDSDDDTL) is disordered. Residues 421 to 430 (LERLTKLKSD) show a composition bias toward basic and acidic residues.

Belongs to the nucleotide-sugar transporter family. SLC35A subfamily. In terms of assembly, probably forms homooligomers and heterooligomers with SLC35A1, SLC35A2, SLC35A3 and SLC35A4.

The protein resides in the golgi apparatus membrane. The catalysed reaction is UMP(out) + UDP-alpha-D-glucuronate(in) = UMP(in) + UDP-alpha-D-glucuronate(out). It carries out the reaction UMP(out) + UDP-N-acetyl-alpha-D-glucosamine(in) = UMP(in) + UDP-N-acetyl-alpha-D-glucosamine(out). The enzyme catalyses UDP-N-acetyl-alpha-D-galactosamine(in) + UMP(out) = UDP-N-acetyl-alpha-D-galactosamine(out) + UMP(in). Functionally, probable UDP-sugar:UMP transmembrane antiporter involved in UDP-alpha-D-glucuronate/UDP-GlcA, UDP-GlcNAc/UDP-N-acetyl-alpha-D-glucosamine and UDP-N-acetyl-alpha-D-galactosamine/UDP-GalNAc transport from the cytosol to the lumen of the Golgi. The polypeptide is UDP-sugar transporter protein SLC35A5 (Mus musculus (Mouse)).